A 132-amino-acid polypeptide reads, in one-letter code: MAAPKSAVRKPRRKDKKNIAVGQAHIKSTFNNTIVSITDPTGAVISWASSGVVGYNGSRKSTPFAAQLAAESAARQAQEHGMKKVDVFVKGPGSGRETAIRSLQAAGLEVGSINDVTPQAHNGCRPPKRRRV.

The tract at residues 1-21 (MAAPKSAVRKPRRKDKKNIAV) is disordered. Basic residues predominate over residues 7–16 (AVRKPRRKDK).

It belongs to the universal ribosomal protein uS11 family. As to quaternary structure, part of the 30S ribosomal subunit. Interacts with proteins S7 and S18. Binds to IF-3.

Located on the platform of the 30S subunit, it bridges several disparate RNA helices of the 16S rRNA. Forms part of the Shine-Dalgarno cleft in the 70S ribosome. In Clavibacter sepedonicus (Clavibacter michiganensis subsp. sepedonicus), this protein is Small ribosomal subunit protein uS11.